The sequence spans 222 residues: Holliday junction branch migration complex subunit RuvA (222 aa).

The tract at residues 1–67 (MISWLNGLKI…EDGSQLIGFL (67 aa)) is domain I. The tract at residues 68 to 146 (NKLERDLFRK…DLIGSSLKKT (79 aa)) is domain II. Residues 147 to 155 (NNHLELEYE) are flexible linker. Residues 155 to 222 (ETNVADEVRS…TLIRINTESG (68 aa)) are domain III.

Belongs to the RuvA family. As to quaternary structure, homotetramer. Forms an RuvA(8)-RuvB(12)-Holliday junction (HJ) complex. HJ DNA is sandwiched between 2 RuvA tetramers; dsDNA enters through RuvA and exits via RuvB. An RuvB hexamer assembles on each DNA strand where it exits the tetramer. Each RuvB hexamer is contacted by two RuvA subunits (via domain III) on 2 adjacent RuvB subunits; this complex drives branch migration. In the full resolvosome a probable DNA-RuvA(4)-RuvB(12)-RuvC(2) complex forms which resolves the HJ.

Its subcellular location is the cytoplasm. In terms of biological role, the RuvA-RuvB-RuvC complex processes Holliday junction (HJ) DNA during genetic recombination and DNA repair, while the RuvA-RuvB complex plays an important role in the rescue of blocked DNA replication forks via replication fork reversal (RFR). RuvA specifically binds to HJ cruciform DNA, conferring on it an open structure. The RuvB hexamer acts as an ATP-dependent pump, pulling dsDNA into and through the RuvAB complex. HJ branch migration allows RuvC to scan DNA until it finds its consensus sequence, where it cleaves and resolves the cruciform DNA. In Prochlorococcus marinus (strain SARG / CCMP1375 / SS120), this protein is Holliday junction branch migration complex subunit RuvA.